The sequence spans 238 residues: Lipoprotein-releasing system ATP-binding protein LolD (238 aa).

Positions 6 to 238 constitute an ABC transporter domain; it reads LVCQGIRKVY…RSSLAQEMEA (233 aa). ATP is bound at residue 42-49; the sequence is GSSGSGKS.

This sequence belongs to the ABC transporter superfamily. Lipoprotein translocase (TC 3.A.1.125) family. As to quaternary structure, the complex is composed of two ATP-binding proteins (LolD) and two transmembrane proteins (LolC and LolE).

Its subcellular location is the cell inner membrane. In terms of biological role, part of the ABC transporter complex LolCDE involved in the translocation of mature outer membrane-directed lipoproteins, from the inner membrane to the periplasmic chaperone, LolA. Responsible for the formation of the LolA-lipoprotein complex in an ATP-dependent manner. This chain is Lipoprotein-releasing system ATP-binding protein LolD, found in Aliivibrio fischeri (strain ATCC 700601 / ES114) (Vibrio fischeri).